Reading from the N-terminus, the 368-residue chain is UDP-N-acetylenolpyruvoylglucosamine reductase (368 aa).

The FAD-binding PCMH-type domain occupies 32-199 (IGGKPRSAVR…LAIELQLLTD (168 aa)). Residue R177 is part of the active site. The Proton donor role is filled by S257. E358 is an active-site residue.

Belongs to the MurB family. It depends on FAD as a cofactor.

Its subcellular location is the cytoplasm. The catalysed reaction is UDP-N-acetyl-alpha-D-muramate + NADP(+) = UDP-N-acetyl-3-O-(1-carboxyvinyl)-alpha-D-glucosamine + NADPH + H(+). It functions in the pathway cell wall biogenesis; peptidoglycan biosynthesis. Its function is as follows. Cell wall formation. This Corynebacterium glutamicum (strain R) protein is UDP-N-acetylenolpyruvoylglucosamine reductase.